Here is a 437-residue protein sequence, read N- to C-terminus: Sodium/bile acid cotransporter 4 (437 aa).

Over 1 to 103 (MDGNDNVTLL…LPFWDTPLNH (103 aa)) the chain is Extracellular. Asn-6, Asn-18, and Asn-24 each carry an N-linked (GlcNAc...) asparagine glycan. Positions 37-82 (APASSAGPGPGLSLGPGPSFGFSPGPTPTPEPTTSGLAGGAASHGP) are disordered. Positions 51 to 60 (GPGPSFGFSP) are enriched in low complexity. The helical transmembrane segment at 104–124 (GLNVFVGAALCITMLGLGCTV) threads the bilayer. The Cytoplasmic segment spans residues 125-140 (DVNHFGAHVRRPVGAL). A helical transmembrane segment spans residues 141–161 (LAALCQFGLLPLLAFLLALAF). Residues 162–197 (KLDEVAAVAVLLCGCCPGGNLSNLMSLLVDGDMNLS) lie on the Extracellular side of the membrane. Asn-181 and Asn-195 each carry an N-linked (GlcNAc...) asparagine glycan. The chain crosses the membrane as a helical span at residues 198-218 (IIMTISSTLLALVLMPLCLWI). The Cytoplasmic portion of the chain corresponds to 219-233 (YSWAWINTPIVQLLP). The chain crosses the membrane as a helical span at residues 234 to 254 (LGTVTLTLCSTLIPIGLGVFI). The Extracellular portion of the chain corresponds to 255-267 (RYKYSRVADYIVK). The helical transmembrane segment at 268–288 (VSLWSLLVTLVVLFIMTGTML) threads the bilayer. Topologically, residues 289–291 (GPE) are cytoplasmic. Residues 292–312 (LLASIPAAVYVIAIFMPLAGY) form a helical membrane-spanning segment. Topologically, residues 313–360 (ASGYGLATLFHLPPNCKRTVCLETGSQNVQLCTAILKLAFPPQFIGSM) are extracellular. A helical membrane pass occupies residues 361–381 (YMFPLLYALFQSAEAGIFVLI). The Cytoplasmic portion of the chain corresponds to 382–437 (YKMYGSEMLHKRDPLDEDEDTDISYKKLKEEEMADTSYGTVKAENIIMMETAQTSL).

Belongs to the bile acid:sodium symporter (BASS) (TC 2.A.28) family. Activated following N-terminal proteolytic cleavage by thrombin and/or proteases. As to expression, highly expressed in brain and small intestine, and moderately expressed in colon, heart, prostate, and testis. Very low levels were detected in kidney, liver, ovary, placenta, spleen, and thymus.

The protein resides in the cell membrane. Functionally, transporter for bile acids. The protein is Sodium/bile acid cotransporter 4 (SLC10A4) of Homo sapiens (Human).